The following is a 271-amino-acid chain: 5-deoxy-glucuronate isomerase (271 aa).

The protein belongs to the isomerase IolB family.

It catalyses the reaction 5-deoxy-D-glucuronate = 5-dehydro-2-deoxy-D-gluconate. Its pathway is polyol metabolism; myo-inositol degradation into acetyl-CoA; acetyl-CoA from myo-inositol: step 4/7. Its function is as follows. Involved in the isomerization of 5-deoxy-glucuronate (5DG) to 5-dehydro-2-deoxy-D-gluconate (DKG or 2-deoxy-5-keto-D-gluconate). The polypeptide is 5-deoxy-glucuronate isomerase (Shouchella clausii (strain KSM-K16) (Alkalihalobacillus clausii)).